The chain runs to 520 residues: Catalase easC (520 aa).

His-71 is an active-site residue. Tyr-361 serves as a coordination point for heme.

Belongs to the catalase family. Heme is required as a cofactor.

The protein operates within alkaloid biosynthesis; ergot alkaloid biosynthesis. Its function is as follows. Catalase; part of the gene cluster that mediates the biosynthesis of fumiclavanine C, a fungal ergot alkaloid. DmaW catalyzes the first step of ergot alkaloid biosynthesis by condensing dimethylallyl diphosphate (DMAP) and tryptophan to form 4-dimethylallyl-L-tryptophan. The second step is catalyzed by the methyltransferase easF that methylates 4-dimethylallyl-L-tryptophan in the presence of S-adenosyl-L-methionine, resulting in the formation of 4-dimethylallyl-L-abrine. The catalase easC and the FAD-dependent oxidoreductase easE then transform 4-dimethylallyl-L-abrine to chanoclavine-I which is further oxidized by EasD in the presence of NAD(+), resulting in the formation of chanoclavine-I aldehyde. EasA reduces chanoclavine-I aldehyde to dihydrochanoclavine-I aldehyde that spontaneously dehydrates to form 6,8-dimethyl-6,7-didehydroergoline. EasG then catalyzes the reduction of 6,8-dimethyl-6,7-didehydroergoline to form festuclavine. Hydrolysis of festuclavine by easM then leads to the formation of fumigaclavine B which is in turn acetylated by easN to fumigaclavine A. Finally, easL catalyzes the conversion of fumigaclavine A into fumigaclavine C by attaching a dimethylallyl moiety to C-2 of the indole nucleus. The polypeptide is Catalase easC (Aspergillus fumigatus (strain ATCC MYA-4609 / CBS 101355 / FGSC A1100 / Af293) (Neosartorya fumigata)).